Here is a 476-residue protein sequence, read N- to C-terminus: Cysteine--tRNA ligase (476 aa).

Residue Cys27 participates in Zn(2+) binding. A 'HIGH' region motif is present at residues 29–39 (PTTYNYIHLGN). Zn(2+) is bound by residues Cys207, His232, and Glu236. A 'KMSKS' region motif is present at residues 264 to 268 (KMSKS). ATP is bound at residue Lys267.

Belongs to the class-I aminoacyl-tRNA synthetase family. In terms of assembly, monomer. Zn(2+) is required as a cofactor.

The protein localises to the cytoplasm. It catalyses the reaction tRNA(Cys) + L-cysteine + ATP = L-cysteinyl-tRNA(Cys) + AMP + diphosphate. In Moorella thermoacetica (strain ATCC 39073 / JCM 9320), this protein is Cysteine--tRNA ligase.